A 406-amino-acid chain; its full sequence is Tyrosine--tRNA ligase (406 aa).

Tyrosine 35 is a binding site for L-tyrosine. Residues 40 to 49 carry the 'HIGH' region motif; it reads PTADSLHVGH. Positions 168 and 172 each coordinate L-tyrosine. A 'KMSKS' region motif is present at residues 228 to 232; that stretch reads KMGKT. Lysine 231 lines the ATP pocket. Residues 340–404 enclose the S4 RNA-binding domain; that stretch reads LPILDVMAST…RGKKNYNKIE (65 aa).

It belongs to the class-I aminoacyl-tRNA synthetase family. TyrS type 1 subfamily. Homodimer.

It localises to the cytoplasm. The enzyme catalyses tRNA(Tyr) + L-tyrosine + ATP = L-tyrosyl-tRNA(Tyr) + AMP + diphosphate + H(+). Its function is as follows. Catalyzes the attachment of tyrosine to tRNA(Tyr) in a two-step reaction: tyrosine is first activated by ATP to form Tyr-AMP and then transferred to the acceptor end of tRNA(Tyr). The polypeptide is Tyrosine--tRNA ligase (Clostridium beijerinckii (strain ATCC 51743 / NCIMB 8052) (Clostridium acetobutylicum)).